A 534-amino-acid polypeptide reads, in one-letter code: Probable cytochrome c oxidase subunit 1 (534 aa).

8 consecutive transmembrane segments (helical) span residues 35–55 (IMYI…SLLF), 76–96 (VLIT…ALFS), 97–117 (GFGN…FPRL), 120–140 (ISFW…FIDG), 165–185 (VAIF…INLI), 202–222 (PLFV…MPVL), 254–274 (LFWF…FGIV), and 286–306 (IFGY…GFIV). Residue His-81 participates in Fe(II)-heme a binding. Cu cation-binding residues include His-260 and Tyr-264. Positions 260–264 (HPEVY) form a cross-link, 1'-histidyl-3'-tyrosine (His-Tyr). Positions 309 and 310 each coordinate Cu cation. 2 consecutive transmembrane segments (helical) span residues 320–340 (ALIY…IKIF) and 357–377 (MLFA…GIIL). His-395 is a heme a3 binding site. 3 helical membrane passes run 396–416 (FHYT…YYWF), 433–453 (FWIT…LGLA), and 475–495 (IGAG…FYTL). Fe(II)-heme a is bound at residue His-397.

The protein belongs to the heme-copper respiratory oxidase family.

The protein resides in the cell membrane. The catalysed reaction is 4 Fe(II)-[cytochrome c] + O2 + 8 H(+)(in) = 4 Fe(III)-[cytochrome c] + 2 H2O + 4 H(+)(out). It participates in energy metabolism; oxidative phosphorylation. Its function is as follows. Cytochrome c oxidase is the component of the respiratory chain that catalyzes the reduction of oxygen to water. Subunits 1-3 form the functional core of the enzyme complex. CO I is the catalytic subunit of the enzyme. Electrons originating in cytochrome c are transferred via the copper A center of subunit 2 and heme A of subunit 1 to the bimetallic center formed by heme A3 and copper B. In Rickettsia prowazekii (strain Madrid E), this protein is Probable cytochrome c oxidase subunit 1 (ctaD).